The primary structure comprises 262 residues: Snake venom serine proteinase 1 (262 aa).

The first 18 residues, 1–18, serve as a signal peptide directing secretion; that stretch reads MVLIRVLANLLILQLSYA. A propeptide spanning residues 19 to 24 is cleaved from the precursor; sequence QKSSEL. Residues 25–253 enclose the Peptidase S1 domain; the sequence is VIGGDECNIN…HLDWIQSIIA (229 aa). 5 disulfides stabilise this stretch: cysteine 31/cysteine 165, cysteine 52/cysteine 68, cysteine 144/cysteine 214, cysteine 176/cysteine 193, and cysteine 204/cysteine 229. Histidine 67 serves as the catalytic Charge relay system. The N-linked (GlcNAc...) asparagine glycan is linked to asparagine 105. Aspartate 112 (charge relay system) is an active-site residue. The active-site Charge relay system is the serine 208.

Belongs to the peptidase S1 family. Snake venom subfamily. As to quaternary structure, monomer. Expressed by the venom gland.

The protein localises to the secreted. Snake venom serine protease that may act in the hemostasis system of the prey. In Crotalus adamanteus (Eastern diamondback rattlesnake), this protein is Snake venom serine proteinase 1.